The primary structure comprises 316 residues: Tyrosine recombinase XerC (316 aa).

One can recognise a Core-binding (CB) domain in the interval 11–97 (SGLRKPLDQF…SLRSFFDFLI (87 aa)). The Tyr recombinase domain maps to 118 to 298 (PLPKNLDVDE…DFQHLADVYD (181 aa)). Catalysis depends on residues R157, K181, H250, R253, and H276. Y285 acts as the O-(3'-phospho-DNA)-tyrosine intermediate in catalysis.

The protein belongs to the 'phage' integrase family. XerC subfamily. Forms a cyclic heterotetrameric complex composed of two molecules of XerC and two molecules of XerD.

It localises to the cytoplasm. Site-specific tyrosine recombinase, which acts by catalyzing the cutting and rejoining of the recombining DNA molecules. The XerC-XerD complex is essential to convert dimers of the bacterial chromosome into monomers to permit their segregation at cell division. It also contributes to the segregational stability of plasmids. This is Tyrosine recombinase XerC from Vibrio vulnificus (strain CMCP6).